The sequence spans 78 residues: Teretoxin Tsu6.15 (78 aa).

The first 21 residues, 1 to 21, serve as a signal peptide directing secretion; that stretch reads MATSGRLLCFCLVLGLVFESL. Positions 22–47 are excised as a propeptide; sequence GYSEARPPRDRKRTVTAKRYDPLAQR.

The protein belongs to the teretoxin M (TM) superfamily. Contains 3 disulfide bonds. In terms of tissue distribution, expressed by the venom duct.

It localises to the secreted. This is Teretoxin Tsu6.15 from Terebra subulata (Chocolate spotted auger).